The chain runs to 127 residues: Fumarate reductase subunit C (127 aa).

Helical transmembrane passes span 30–50, 67–87, and 107–127; these read ATIL…GCLV, IVVV…QTFF, and IIVL…LVLV.

This sequence belongs to the FrdC family. As to quaternary structure, part of an enzyme complex containing four subunits: a flavoprotein (FrdA), an iron-sulfur protein (FrdB), and two hydrophobic anchor proteins (FrdC and FrdD).

The protein resides in the cell inner membrane. Functionally, anchors the catalytic components of the fumarate reductase complex to the cell membrane, binds quinones. The chain is Fumarate reductase subunit C from Photobacterium profundum (strain SS9).